The following is a 492-amino-acid chain: Catalase (492 aa).

Catalysis depends on residues histidine 65 and asparagine 138. Tyrosine 348 is a heme binding site.

It belongs to the catalase family. In terms of assembly, homotetramer. The cofactor is heme.

It is found in the cytoplasm. The protein localises to the cytosol. Its subcellular location is the peroxisome matrix. It catalyses the reaction 2 H2O2 = O2 + 2 H2O. In terms of biological role, catalyzes the degradation of hydrogen peroxide (H(2)O(2)) generated by peroxisomal oxidases to water and oxygen, thereby protecting cells from the toxic effects of hydrogen peroxide. In Vigna radiata var. radiata (Mung bean), this protein is Catalase.